An 84-amino-acid chain; its full sequence is Small ribosomal subunit protein eS27z (84 aa).

The C4-type zinc finger occupies Cys-39–Cys-61.

It belongs to the eukaryotic ribosomal protein eS27 family. (Microbial infection) May interact with Tomato yellow leaf curl virus (TYLCV) and papaya leaf curl China virus (PaLcuCNV) C2 proteins. This interaction prevents activation of Jasmonate signaling, thereby facilitating viral uptake by insects vectors. Zn(2+) is required as a cofactor.

The protein is Small ribosomal subunit protein eS27z (RPS27A) of Arabidopsis thaliana (Mouse-ear cress).